Consider the following 285-residue polypeptide: Eukaryotic translation initiation factor 3 subunit J (285 aa).

Disordered regions lie at residues 1–86 (MSWD…QLDE) and 232–285 (QARL…DDFM). The span at 22-41 (WEDEEDDGPVLESWDVDPEE) shows a compositional bias: acidic residues. Residues 36–81 (DVDPEEEEKKKKEAKLQEAKRKAELKAKEDAEKAKKDAKRKELEQF) adopt a coiled-coil conformation. Over residues 42 to 86 (EEKKKKEAKLQEAKRKAELKAKEDAEKAKKDAKRKELEQFDQLDE) the composition is skewed to basic and acidic residues. Residues 269–285 (DDMDDGQFDDLDDDDFM) are compositionally biased toward acidic residues.

It belongs to the eIF-3 subunit J family. As to quaternary structure, component of the eukaryotic translation initiation factor 3 (eIF-3) complex.

It is found in the cytoplasm. In terms of biological role, component of the eukaryotic translation initiation factor 3 (eIF-3) complex, which is involved in protein synthesis of a specialized repertoire of mRNAs and, together with other initiation factors, stimulates binding of mRNA and methionyl-tRNAi to the 40S ribosome. The eIF-3 complex specifically targets and initiates translation of a subset of mRNAs involved in cell proliferation. In Candida albicans (strain SC5314 / ATCC MYA-2876) (Yeast), this protein is Eukaryotic translation initiation factor 3 subunit J.